We begin with the raw amino-acid sequence, 265 residues long: Undecaprenyl-diphosphatase 1 (265 aa).

7 helical membrane passes run 4 to 24 (IITA…PISS), 42 to 62 (AKTF…ILYH), 84 to 104 (FHVF…HDVI), 108 to 128 (LFQP…MIFA), 184 to 204 (SEFS…LDLL), 217 to 237 (MFAV…VTFL), and 245 to 265 (LKPF…FVLL).

This sequence belongs to the UppP family.

The protein localises to the cell membrane. It carries out the reaction di-trans,octa-cis-undecaprenyl diphosphate + H2O = di-trans,octa-cis-undecaprenyl phosphate + phosphate + H(+). Functionally, catalyzes the dephosphorylation of undecaprenyl diphosphate (UPP). Confers resistance to bacitracin. In Bacillus anthracis, this protein is Undecaprenyl-diphosphatase 1.